Here is a 246-residue protein sequence, read N- to C-terminus: UDP-N-acetyl-D-mannosaminuronic acid transferase (246 aa).

The protein belongs to the glycosyltransferase 26 family.

The enzyme catalyses UDP-N-acetyl-alpha-D-mannosaminouronate + N-acetyl-alpha-D-glucosaminyl-di-trans,octa-cis-undecaprenyl diphosphate = beta-D-ManNAcA-(1-&gt;4)-alpha-D-GlcNAc-di-trans,octa-cis-undecaprenyl diphosphate + UDP + H(+). Its pathway is bacterial outer membrane biogenesis; enterobacterial common antigen biosynthesis. Functionally, catalyzes the synthesis of Und-PP-GlcNAc-ManNAcA (Lipid II), the second lipid-linked intermediate involved in enterobacterial common antigen (ECA) synthesis. The sequence is that of UDP-N-acetyl-D-mannosaminuronic acid transferase from Salmonella choleraesuis (strain SC-B67).